The primary structure comprises 346 residues: Protein-glutamate methylesterase/protein-glutamine glutaminase (346 aa).

One can recognise a Response regulatory domain in the interval 6–123; sequence KVLVVDDSAF…SLDLEKVRDL (118 aa). Asp57 carries the post-translational modification 4-aspartylphosphate. The region spanning 155 to 346 is the CheB-type methylesterase domain; the sequence is PFDKTIIVIG…ADSIVRQCKR (192 aa). Residues Ser166, His193, and Asp289 contribute to the active site.

Belongs to the CheB family. Post-translationally, phosphorylated by CheA. Phosphorylation of the N-terminal regulatory domain activates the methylesterase activity.

Its subcellular location is the cytoplasm. The enzyme catalyses [protein]-L-glutamate 5-O-methyl ester + H2O = L-glutamyl-[protein] + methanol + H(+). It carries out the reaction L-glutaminyl-[protein] + H2O = L-glutamyl-[protein] + NH4(+). Functionally, involved in chemotaxis. Part of a chemotaxis signal transduction system that modulates chemotaxis in response to various stimuli. Catalyzes the demethylation of specific methylglutamate residues introduced into the chemoreceptors (methyl-accepting chemotaxis proteins or MCP) by CheR. Also mediates the irreversible deamidation of specific glutamine residues to glutamic acid. The polypeptide is Protein-glutamate methylesterase/protein-glutamine glutaminase (Halalkalibacterium halodurans (strain ATCC BAA-125 / DSM 18197 / FERM 7344 / JCM 9153 / C-125) (Bacillus halodurans)).